Reading from the N-terminus, the 220-residue chain is Protein GrpE (220 aa).

The interval 1-22 (MSDEKNKFTDASFENCDLKNPS) is disordered.

This sequence belongs to the GrpE family. As to quaternary structure, homodimer.

It is found in the cytoplasm. Its function is as follows. Participates actively in the response to hyperosmotic and heat shock by preventing the aggregation of stress-denatured proteins, in association with DnaK and GrpE. It is the nucleotide exchange factor for DnaK and may function as a thermosensor. Unfolded proteins bind initially to DnaJ; upon interaction with the DnaJ-bound protein, DnaK hydrolyzes its bound ATP, resulting in the formation of a stable complex. GrpE releases ADP from DnaK; ATP binding to DnaK triggers the release of the substrate protein, thus completing the reaction cycle. Several rounds of ATP-dependent interactions between DnaJ, DnaK and GrpE are required for fully efficient folding. This Bartonella henselae (strain ATCC 49882 / DSM 28221 / CCUG 30454 / Houston 1) (Rochalimaea henselae) protein is Protein GrpE.